The sequence spans 345 residues: MKKITVLGAGSWGTALALVLADNHHDVHMWGHRQELIDQIDEKHENHDYLPNVALPASIKATTDMKQALEGTDAIIVAVPTKAIREVLKRANELITSKVPFVHVSKGIEPDTLLRISQMIEQEVPDEKREAVVVLSGPSHAEEVGLRHPTTVTVSSENIEAAQFVQDLFMNNNFRVYTNPDVIGVEIGGALKNIIALAAGITDGLGYGDNAKAALITRGLAEIARLGTQMGGNPLTFAGLTGVGDLIVTCTSVHSRNWRCGNLLGKGYKLEEVLEKMGMVVEGVRTTKGAYQLSKEYKVSMPITEALYHVLFEGKKVDDAVESLMARVKTHEMEDLVNMFENQTK.

Residues serine 11, tryptophan 12, histidine 32, arginine 33, and lysine 106 each contribute to the NADPH site. Positions 106, 137, and 139 each coordinate sn-glycerol 3-phosphate. Alanine 141 is a binding site for NADPH. Residues lysine 192, aspartate 245, serine 255, arginine 256, and asparagine 257 each contribute to the sn-glycerol 3-phosphate site. The active-site Proton acceptor is the lysine 192. Residue arginine 256 coordinates NADPH. The NADPH site is built by valine 280 and glutamate 282.

This sequence belongs to the NAD-dependent glycerol-3-phosphate dehydrogenase family.

The protein resides in the cytoplasm. The enzyme catalyses sn-glycerol 3-phosphate + NAD(+) = dihydroxyacetone phosphate + NADH + H(+). The catalysed reaction is sn-glycerol 3-phosphate + NADP(+) = dihydroxyacetone phosphate + NADPH + H(+). The protein operates within membrane lipid metabolism; glycerophospholipid metabolism. Its function is as follows. Catalyzes the reduction of the glycolytic intermediate dihydroxyacetone phosphate (DHAP) to sn-glycerol 3-phosphate (G3P), the key precursor for phospholipid synthesis. The protein is Glycerol-3-phosphate dehydrogenase [NAD(P)+] of Bacillus pumilus (strain SAFR-032).